A 428-amino-acid chain; its full sequence is Histidinol dehydrogenase (428 aa).

Positions 126, 188, and 211 each coordinate NAD(+). Positions 234, 256, and 259 each coordinate substrate. Residues Gln256 and His259 each coordinate Zn(2+). Active-site proton acceptor residues include Glu324 and His325. 4 residues coordinate substrate: His325, Asp358, Glu412, and His417. Zn(2+) is bound at residue Asp358. A Zn(2+)-binding site is contributed by His417.

The protein belongs to the histidinol dehydrogenase family. Zn(2+) serves as cofactor.

The catalysed reaction is L-histidinol + 2 NAD(+) + H2O = L-histidine + 2 NADH + 3 H(+). It participates in amino-acid biosynthesis; L-histidine biosynthesis; L-histidine from 5-phospho-alpha-D-ribose 1-diphosphate: step 9/9. Catalyzes the sequential NAD-dependent oxidations of L-histidinol to L-histidinaldehyde and then to L-histidine. The polypeptide is Histidinol dehydrogenase (Chlorobium chlorochromatii (strain CaD3)).